Here is a 251-residue protein sequence, read N- to C-terminus: Hydroxyacylglutathione hydrolase (251 aa).

7 residues coordinate Zn(2+): H53, H55, D57, H58, H110, D127, and H165.

Belongs to the metallo-beta-lactamase superfamily. Glyoxalase II family. In terms of assembly, monomer. Requires Zn(2+) as cofactor.

It catalyses the reaction an S-(2-hydroxyacyl)glutathione + H2O = a 2-hydroxy carboxylate + glutathione + H(+). Its pathway is secondary metabolite metabolism; methylglyoxal degradation; (R)-lactate from methylglyoxal: step 2/2. Its function is as follows. Thiolesterase that catalyzes the hydrolysis of S-D-lactoyl-glutathione to form glutathione and D-lactic acid. The chain is Hydroxyacylglutathione hydrolase from Salmonella paratyphi A (strain ATCC 9150 / SARB42).